We begin with the raw amino-acid sequence, 203 residues long: Pectinesterase inhibitor 12 (203 aa).

Residues 1-26 (MRMSKALAAVVAISVSLSAAAMGVDA) form the signal peptide. 2 disulfides stabilise this stretch: cysteine 32–cysteine 47 and cysteine 100–cysteine 140.

Belongs to the PMEI family.

The protein resides in the secreted. It is found in the extracellular space. The protein localises to the apoplast. In terms of biological role, pectin methylesterase (PME) inhibitor that inhibits PME in vitro. In Oryza sativa subsp. japonica (Rice), this protein is Pectinesterase inhibitor 12.